The primary structure comprises 264 residues: Molybdenum transport system permease protein ModB (264 aa).

6 consecutive transmembrane segments (helical) span residues 11 to 31 (VYLP…AIAI), 57 to 77 (TAAA…LVLA), 90 to 110 (LILL…LYAF), 127 to 147 (IAFS…PYLV), 176 to 196 (WWRV…VLAF), and 234 to 254 (AAVA…LGVG). One can recognise an ABC transmembrane type-1 domain in the interval 51–253 (LLLSVKTAAA…VVAALVVLGV (203 aa)).

The protein belongs to the binding-protein-dependent transport system permease family. CysTW subfamily.

Its subcellular location is the cell membrane. In terms of biological role, part of the binding-protein-dependent transport system ModABCD for molybdenum; probably responsible for the translocation of the substrate across the membrane. This Mycobacterium bovis (strain ATCC BAA-935 / AF2122/97) protein is Molybdenum transport system permease protein ModB (modB).